The sequence spans 450 residues: uncharacterized protein (450 aa).

The residue at position 283 (lysine 283) is an N6-(pyridoxal phosphate)lysine.

It belongs to the class-III pyridoxal-phosphate-dependent aminotransferase family. Pyridoxal 5'-phosphate is required as a cofactor.

Essential for glycerol catabolism. This is an uncharacterized protein from Bacillus subtilis (strain 168).